Consider the following 202-residue polypeptide: Dephospho-CoA kinase (202 aa).

A DPCK domain is found at 5-202 (IVGLTGGIAS…DADYRARANP (198 aa)). 13–18 (ASGKSA) serves as a coordination point for ATP.

The protein belongs to the CoaE family.

Its subcellular location is the cytoplasm. The catalysed reaction is 3'-dephospho-CoA + ATP = ADP + CoA + H(+). It functions in the pathway cofactor biosynthesis; coenzyme A biosynthesis; CoA from (R)-pantothenate: step 5/5. In terms of biological role, catalyzes the phosphorylation of the 3'-hydroxyl group of dephosphocoenzyme A to form coenzyme A. In Xanthomonas axonopodis pv. citri (strain 306), this protein is Dephospho-CoA kinase.